The chain runs to 534 residues: Steroid hormone receptor family member cnr14 (534 aa).

Disordered stretches follow at residues 30–53 (SGKT…QWSH) and 119–139 (PATS…GHTT). Positions 119-130 (PATSVTSSLSPP) are enriched in low complexity. Positions 148–223 (ISFCKVCGDK…SGMSKDSVRQ (76 aa)) form a DNA-binding region, nuclear receptor. 2 NR C4-type zinc fingers span residues 151–171 (CKVC…CEGC) and 187–211 (CLKQ…FKKC). The NR LBD domain occupies 252-493 (EVDAVYEAVL…PPLVVEMFQL (242 aa)). Positions 502 to 534 (HNNQENQYTPAPEHQSPQPQQPTPNQQQTPVHC) are disordered. Positions 511–534 (PAPEHQSPQPQQPTPNQQQTPVHC) are enriched in low complexity.

Belongs to the nuclear hormone receptor family. NR1 subfamily. In terms of tissue distribution, most abundant in embryos.

It localises to the nucleus. Functionally, transcriptional regulator which is involved in the sex determination and X chromosome dosage compensation pathways. Directly binds to five 5'-A(G/C)(G/T)(T/G)C(A/G)-3' sites in the promoter of sex-determining factor xol-1 to negatively regulate its expression and promote hermaphrodite development. Together with fox-1 is involved in making the distinction between one and two X-chromosomes. Plays a role in the fox-1-mediated repression of the functionally active isoform (isoform b) of the sex-determining factor xol-1 gene to promote hermaphrodite development. Plays a role in the association of the dosage compensation complex proteins dpy-27 and sdc-3 with the hermaphrodite X chromosomes. This is Steroid hormone receptor family member cnr14 from Caenorhabditis elegans.